Reading from the N-terminus, the 353-residue chain is Paraneoplastic antigen Ma1 homolog (353 aa).

Belongs to the PNMA family. Predominantly expressed in testis. Very low levels in the brain, including in the piriform cortex, hippocampus and some subcortical nuclei.

The protein localises to the nucleus. It is found in the nucleolus. This chain is Paraneoplastic antigen Ma1 homolog (Pnma1), found in Mus musculus (Mouse).